Consider the following 271-residue polypeptide: Putative phosphoenolpyruvate synthase regulatory protein (271 aa).

Gly151–Thr158 lines the ADP pocket.

Belongs to the pyruvate, phosphate/water dikinase regulatory protein family. PSRP subfamily.

The enzyme catalyses [pyruvate, water dikinase] + ADP = [pyruvate, water dikinase]-phosphate + AMP + H(+). It carries out the reaction [pyruvate, water dikinase]-phosphate + phosphate + H(+) = [pyruvate, water dikinase] + diphosphate. Bifunctional serine/threonine kinase and phosphorylase involved in the regulation of the phosphoenolpyruvate synthase (PEPS) by catalyzing its phosphorylation/dephosphorylation. The chain is Putative phosphoenolpyruvate synthase regulatory protein from Paraburkholderia phytofirmans (strain DSM 17436 / LMG 22146 / PsJN) (Burkholderia phytofirmans).